Reading from the N-terminus, the 394-residue chain is Junctional adhesion molecule-like (394 aa).

A signal peptide spans 1–19; it reads MFCPLKLILLPVLLDYSLG. Ig-like V-type domains follow at residues 20 to 132 and 137 to 250; these read LNDL…KAVV and PEEP…IVLH. Residues 20-275 are Extracellular-facing; the sequence is LNDLNVSPPE…RPLVLGGNQL (256 aa). 2 disulfides stabilise this stretch: cysteine 42–cysteine 116 and cysteine 155–cysteine 234. 2 N-linked (GlcNAc...) asparagine glycosylation sites follow: asparagine 76 and asparagine 231. Residues 276-296 traverse the membrane as a helical segment; the sequence is VIIVGIVCATILLLPVLILIV. Residues 297 to 394 are Cytoplasmic-facing; sequence KKTCGNKSSV…GGMPKTQQAF (98 aa). Residues 369 to 394 form a disordered region; sequence PSLRSDRNNSLEKKSGGGMPKTQQAF. Residues 372–383 are compositionally biased toward basic and acidic residues; it reads RSDRNNSLEKKS.

It belongs to the immunoglobulin superfamily. As to quaternary structure, homodimer; active form in leukocyte-endothelial cell adhesion. Interacts (homodimeric form) with CXADR. Interacts (via cytoplasmic domain) with the PI3 kinase; upon CXADR-binding. Interacts with ITGA4 and ITGB1; integrin alpha-4/beta-1 may regulate leukocyte to endothelial cells adhesion by controlling JAML homodimerization. In terms of tissue distribution, expression is restricted to the hematopoietic tissues with the exception of liver. Expressed in fetal liver, spleen and thymus. Preferentially expressed by mature leukocytes (at protein level).

Its subcellular location is the cell membrane. The protein localises to the cell junction. Its function is as follows. Transmembrane protein of the plasma membrane of leukocytes that control their migration and activation through interaction with CXADR, a plasma membrane receptor found on adjacent epithelial and endothelial cells. The interaction between both receptors mediates the activation of gamma-delta T-cells, a subpopulation of T-cells residing in epithelia and involved in tissue homeostasis and repair. Upon epithelial CXADR-binding, JAML induces downstream cell signaling events in gamma-delta T-cells through PI3-kinase and MAP kinases. It results in proliferation and production of cytokines and growth factors by T-cells that in turn stimulate epithelial tissues repair. It also controls the transmigration of leukocytes within epithelial and endothelial tissues through adhesive interactions with epithelial and endothelial CXADR. The chain is Junctional adhesion molecule-like from Homo sapiens (Human).